Here is a 431-residue protein sequence, read N- to C-terminus: Glutamate--tRNA ligase 1 (431 aa).

The 'HIGH' region signature appears at Pro-6–Asn-16. The 'KMSKS' region motif lies at Lys-235–Arg-239. Lys-238 is an ATP binding site.

Belongs to the class-I aminoacyl-tRNA synthetase family. Glutamate--tRNA ligase type 1 subfamily. Monomer.

It is found in the cytoplasm. The catalysed reaction is tRNA(Glu) + L-glutamate + ATP = L-glutamyl-tRNA(Glu) + AMP + diphosphate. Catalyzes the attachment of glutamate to tRNA(Glu) in a two-step reaction: glutamate is first activated by ATP to form Glu-AMP and then transferred to the acceptor end of tRNA(Glu). This is Glutamate--tRNA ligase 1 from Campylobacter jejuni (strain RM1221).